The sequence spans 323 residues: Thymidine kinase (323 aa).

Residue 11 to 18 coordinates ATP; that stretch reads GPHGLGKT. The active-site Proton acceptor is Glu-36. Substrate contacts are provided by Tyr-54 and Gln-78. Arg-169 serves as a coordination point for ATP. A substrate-binding site is contributed by Arg-175.

This sequence belongs to the herpesviridae thymidine kinase family. In terms of assembly, homodimer.

The enzyme catalyses thymidine + ATP = dTMP + ADP + H(+). In terms of biological role, catalyzes the transfer of the gamma-phospho group of ATP to thymidine to generate dTMP in the salvage pathway of pyrimidine synthesis. The dTMP serves as a substrate for DNA polymerase during viral DNA replication. Allows the virus to be reactivated and to grow in non-proliferative cells lacking a high concentration of phosphorylated nucleic acid precursors. The polypeptide is Thymidine kinase (Bos taurus (Bovine)).